Consider the following 114-residue polypeptide: Large ribosomal subunit protein uL24 (114 aa).

It belongs to the universal ribosomal protein uL24 family. In terms of assembly, part of the 50S ribosomal subunit.

In terms of biological role, one of two assembly initiator proteins, it binds directly to the 5'-end of the 23S rRNA, where it nucleates assembly of the 50S subunit. Functionally, one of the proteins that surrounds the polypeptide exit tunnel on the outside of the subunit. This is Large ribosomal subunit protein uL24 from Thermomicrobium roseum (strain ATCC 27502 / DSM 5159 / P-2).